A 43-amino-acid polypeptide reads, in one-letter code: MNITQYEKLKQHLSDEDTGPFTLNEFSFYMKEDDRYIHIPVFE.

This is an uncharacterized protein from Bacillus subtilis (strain 168).